The following is a 446-amino-acid chain: Phosphoglucosamine mutase (446 aa).

Residue S103 is the Phosphoserine intermediate of the active site. Positions 103, 242, 244, and 246 each coordinate Mg(2+). The residue at position 103 (S103) is a Phosphoserine.

The protein belongs to the phosphohexose mutase family. The cofactor is Mg(2+). Activated by phosphorylation.

The enzyme catalyses alpha-D-glucosamine 1-phosphate = D-glucosamine 6-phosphate. Its function is as follows. Catalyzes the conversion of glucosamine-6-phosphate to glucosamine-1-phosphate. This Vibrio vulnificus (strain YJ016) protein is Phosphoglucosamine mutase.